Reading from the N-terminus, the 258-residue chain is Transcription initiation factor TFIID subunit 9B (258 aa).

The residue at position 1 (methionine 1) is an N-acetylmethionine. Serine 147 is modified (phosphoserine). Threonine 159 and threonine 174 each carry phosphothreonine. Serine 177 carries the phosphoserine modification. Polar residues predominate over residues 227–236 (SSQSTATDSN). The segment at 227–258 (SSQSTATDSNPLKRKHDDDDDDDDDDDDNDTM) is disordered. The segment covering 244 to 258 (DDDDDDDDDDDNDTM) has biased composition (acidic residues).

This sequence belongs to the TAF9 family. Binds TAF5 and TAF6. Component of TFIID and the TATA-binding protein-free TAF complex (TFTC). TFIID is composed of TATA binding protein (TBP) and a number of TBP-associated factors (TAFs). Binds N-terminal domain of p53/TP53 which is essential for transcription.

The protein resides in the nucleus. Its function is as follows. Essential for cell viability. TAF9 and TAF9L are involved in transcriptional activation as well as repression of distinct but overlapping sets of genes. May have a role in gene regulation associated with apoptosis. TAFs are components of the transcription factor IID (TFIID) complex, the TBP-free TAFII complex (TFTC), the PCAF histone acetylase complex and the STAGA transcription coactivator-HAT complex. TFIID or TFTC are essential for the regulation of RNA polymerase II-mediated transcription. In Rattus norvegicus (Rat), this protein is Transcription initiation factor TFIID subunit 9B (Taf9b).